Reading from the N-terminus, the 756-residue chain is Protein psiP (756 aa).

An N-terminal signal peptide occupies residues 1–23 (MFIQRTFLKVLTLLSIVTVLVHG). Over 24-692 (QTQPKDKITL…NCNTGAVVST (669 aa)) the chain is Extracellular. N-linked (GlcNAc...) asparagine glycosylation is present at N82. One can recognise a PA14 domain in the interval 126-281 (LNWNGEAYEY…VDYCGVCEGD (156 aa)). Residues N359, N483, N564, and N663 are each glycosylated (N-linked (GlcNAc...) asparagine). Residues 693-713 (AVIAGSTVAGAVALGIFLYGG) traverse the membrane as a helical segment. Topologically, residues 714-756 (KKGYDYWKDSRNISMGSSNSNPLYEEQQTGRGVNPMYDDPAAN) are cytoplasmic. Positions 730-744 (SSNSNPLYEEQQTGR) are enriched in polar residues. Positions 730 to 756 (SSNSNPLYEEQQTGRGVNPMYDDPAAN) are disordered.

The protein belongs to the prespore-cell-inducing factor family.

The protein resides in the membrane. This chain is Protein psiP (psiP), found in Dictyostelium discoideum (Social amoeba).